We begin with the raw amino-acid sequence, 259 residues long: Proteasome subunit alpha type-7 (259 aa).

This sequence belongs to the peptidase T1A family. The 26S proteasome consists of a 20S proteasome core and two 19S regulatory subunits. The 20S proteasome core is composed of 28 subunits that are arranged in four stacked rings, resulting in a barrel-shaped structure. The two end rings are each formed by seven alpha subunits, and the two central rings are each formed by seven beta subunits. The catalytic chamber with the active sites is on the inside of the barrel.

It is found in the cytoplasm. It localises to the nucleus. In terms of biological role, the proteasome is a multicatalytic proteinase complex which is characterized by its ability to cleave peptides with Arg, Phe, Tyr, Leu, and Glu adjacent to the leaving group at neutral or slightly basic pH. The proteasome has an ATP-dependent proteolytic activity. The sequence is that of Proteasome subunit alpha type-7 (PAD1) from Solanum lycopersicum (Tomato).